The primary structure comprises 144 residues: Large ribosomal subunit protein uL15 (144 aa).

The interval 1-56 is disordered; that stretch reads MELNNLKPAAGAKHAKRRVGRGIGSGLGKTAGRGHKGQKSRSGGFHKVGFEGGQMP. Over residues 21–31 the composition is skewed to gly residues; it reads RGIGSGLGKTA.

The protein belongs to the universal ribosomal protein uL15 family. In terms of assembly, part of the 50S ribosomal subunit.

Its function is as follows. Binds to the 23S rRNA. The chain is Large ribosomal subunit protein uL15 from Burkholderia multivorans (strain ATCC 17616 / 249).